We begin with the raw amino-acid sequence, 509 residues long: Anaerobic nitric oxide reductase flavorubredoxin (509 aa).

The zinc metallo-hydrolase stretch occupies residues 30–210 (LQGSSYNSYL…PFSRLVTAKI (181 aa)). Fe cation contacts are provided by His79, Glu81, Asp83, His147, Asp166, and His227. The Flavodoxin-like domain occupies 254-393 (ITLFYDTMSN…VCREHGREIA (140 aa)). FMN contacts are provided by residues 260–264 (TMSNN) and 342–369 (AFGS…ETTL). The Rubredoxin-like domain maps to 457 to 508 (SGCMQCSVCQWIYDPALGEPMQDVTPGTMWSDVPDSFLCPECGLGKDVFNPI). Fe cation-binding residues include Cys462, Cys465, Cys495, and Cys498.

It in the N-terminal section; belongs to the zinc metallo-hydrolase group 3 family. As to quaternary structure, homotetramer. It depends on Fe cation as a cofactor. FMN is required as a cofactor.

It localises to the cytoplasm. Its pathway is nitrogen metabolism; nitric oxide reduction. Functionally, anaerobic nitric oxide reductase; uses NADH to detoxify nitric oxide (NO), protecting several 4Fe-4S NO-sensitive enzymes. Has at least 2 reductase partners, only one of which (NorW, flavorubredoxin reductase) has been identified. NO probably binds to the di-iron center; electrons enter from the NorW at rubredoxin and are transferred sequentially to the FMN center and the di-iron center. Also able to function as an aerobic oxygen reductase. In Pectobacterium atrosepticum (strain SCRI 1043 / ATCC BAA-672) (Erwinia carotovora subsp. atroseptica), this protein is Anaerobic nitric oxide reductase flavorubredoxin.